We begin with the raw amino-acid sequence, 346 residues long: Uroporphyrinogen decarboxylase (346 aa).

Substrate-binding positions include 21–25, Asp-71, Tyr-146, Ser-201, and His-316; that span reads RQAGR.

This sequence belongs to the uroporphyrinogen decarboxylase family. Homodimer.

It is found in the cytoplasm. It carries out the reaction uroporphyrinogen III + 4 H(+) = coproporphyrinogen III + 4 CO2. The protein operates within porphyrin-containing compound metabolism; protoporphyrin-IX biosynthesis; coproporphyrinogen-III from 5-aminolevulinate: step 4/4. Its function is as follows. Catalyzes the decarboxylation of four acetate groups of uroporphyrinogen-III to yield coproporphyrinogen-III. In Rickettsia africae (strain ESF-5), this protein is Uroporphyrinogen decarboxylase.